A 234-amino-acid polypeptide reads, in one-letter code: OVARIAN TUMOR DOMAIN-containing deubiquitinating enzyme 3 (234 aa).

An OTU domain is found at 76 to 234; that stretch reads YAVDRVKGDG…SGRNHYDLLR (159 aa). The tract at residues 81–87 is cys-loop; that stretch reads VKGDGRC. D84 is a catalytic residue. C87 serves as the catalytic Nucleophile. Residues 154–164 are variable-loop; sequence IGRHDFWGGES. The interval 224-229 is his-loop; sequence YSGRNH. H229 is an active-site residue.

It belongs to the peptidase C85 family.

It carries out the reaction Thiol-dependent hydrolysis of ester, thioester, amide, peptide and isopeptide bonds formed by the C-terminal Gly of ubiquitin (a 76-residue protein attached to proteins as an intracellular targeting signal).. Hydrolase that can remove conjugated ubiquitin from proteins in vitro and may therefore play an important regulatory role at the level of protein turnover by preventing degradation. Cysteine protease with a preference for 'Lys-63' over 'Lys-48' over 'Met-1' -linked ubiquitin (UB) tetramers (e.g. Ub3 and Ub4) as substrates. Also cleaves RUB-GST fusion. The sequence is that of OVARIAN TUMOR DOMAIN-containing deubiquitinating enzyme 3 from Arabidopsis thaliana (Mouse-ear cress).